The primary structure comprises 174 residues: Probable NAD(P)H dehydrogenase subunit CRR3, chloroplastic (174 aa).

Residues 1–54 (MAVLSTIYSITRASTPTMASLTNDSPSPLPSSSPSKLPSPTSPSKKPLKLRQVS) constitute a chloroplast transit peptide. Over residues 14–24 (STPTMASLTND) the composition is skewed to polar residues. Residues 14–71 (STPTMASLTNDSPSPLPSSSPSKLPSPTSPSKKPLKLRQVSKQMGSQNQQRRGNKPSI) are disordered. Residues 30–45 (PSSSPSKLPSPTSPSK) are compositionally biased toward low complexity. Residues 53–64 (VSKQMGSQNQQR) are compositionally biased toward polar residues. The chain crosses the membrane as a helical span at residues 140–160 (FTIQWILPIWIMSLLVACGVI).

It localises to the plastid. It is found in the chloroplast thylakoid membrane. Its function is as follows. Probable subunit of the chloroplast NAD(P)H dehydrogenase (NDH) complex of the photosynthetic electron transport chain. Required for both formation and activity of NDH. May function in assembly or stabilization of the NDH complex. The protein is Probable NAD(P)H dehydrogenase subunit CRR3, chloroplastic of Arabidopsis thaliana (Mouse-ear cress).